The primary structure comprises 52 residues: UPF0181 protein HD_1137 (52 aa).

This sequence belongs to the UPF0181 family.

The sequence is that of UPF0181 protein HD_1137 from Haemophilus ducreyi (strain 35000HP / ATCC 700724).